The chain runs to 300 residues: Heme A synthase (300 aa).

Residues 1 to 8 (MLKEKNLK) are Cytoplasmic-facing. A helical transmembrane segment spans residues 9–29 (WLSLFTTVLMLFVQIGGALVT). The Extracellular segment spans residues 30 to 64 (KTGSADGCGSSWPLCHGKFVPTHIPKETLIELAHR). A disulfide bridge links Cys37 with Cys44. Glu60 is a catalytic residue. Position 63 (His63) interacts with heme o. Residues 65 to 85 (GVSGLALLSVTWLVILSIKYI) traverse the membrane as a helical segment. At 86–92 (GHKKETK) the chain is on the cytoplasmic side. A helical transmembrane segment spans residues 93–113 (FLCYMSIGFIFAQALIGAAAV). At 114 to 123 (MWQQNGFVLA) the chain is on the extracellular side. Residues 124–144 (LHFGISLISFSAVFLLTLLIF) traverse the membrane as a helical segment. His125 lines the heme o pocket. Residues 145-163 (EVDQKFDATKLILQPKLRR) are Cytoplasmic-facing. The chain crosses the membrane as a helical span at residues 164-184 (HTIGLTSFIYFVIYSGALVRH). Residues 185-218 (EKASLACSSWPLCRKGAFILPQNFYEWVQMSHRT) lie on the Extracellular side of the membrane. A disulfide bridge connects residues Cys191 and Cys197. His216 serves as a coordination point for heme b. The chain crosses the membrane as a helical span at residues 219–239 (LAFILFIWLTYVAFHAMRNYA). Over 240 to 249 (QYRVIKYGYM) the chain is Cytoplasmic. The helical transmembrane segment at 250 to 270 (IAFILICLQVTTGALTIFTAV) threads the bilayer. Over 271–275 (NLYIA) the chain is Extracellular. Residues 276–296 (LLHALFITLLFGLLCYFILLI) traverse the membrane as a helical segment. Position 278 (His278) interacts with heme b. Over 297–300 (SRAK) the chain is Cytoplasmic.

This sequence belongs to the COX15/CtaA family. Type 1 subfamily. As to quaternary structure, interacts with CtaB. It depends on heme b as a cofactor.

The protein localises to the cell membrane. It carries out the reaction Fe(II)-heme o + 2 A + H2O = Fe(II)-heme a + 2 AH2. It participates in porphyrin-containing compound metabolism; heme A biosynthesis; heme A from heme O: step 1/1. Functionally, catalyzes the conversion of heme O to heme A by two successive hydroxylations of the methyl group at C8. The first hydroxylation forms heme I, the second hydroxylation results in an unstable dihydroxymethyl group, which spontaneously dehydrates, resulting in the formyl group of heme A. In Macrococcus caseolyticus (strain JCSC5402) (Macrococcoides caseolyticum), this protein is Heme A synthase.